Consider the following 620-residue polypeptide: Glutathione-regulated potassium-efflux system protein KefC (620 aa).

12 helical membrane-spanning segments follow: residues 4–24 (HTLLQALIYLGSAALIVPIAV), 26–46 (LGLGSVLGYLIAGCIIGPWGL), 54–74 (SILHFAEIGVVLMLFVIGLEL), 90–110 (GALQMVVCGGLIGLFCMFLGL), 114–134 (VAELIGMTLALSSTAIAMQAM), 149–169 (FAVLLFQDIAAIPLVAMIPLL), 178–198 (LGAFALSALKVAGALALVVLL), 218–238 (VFSAVALFLVFGFGLLLEEVG), 270–290 (GLLLGLFFIGVGMSIDFGTLV), 294–314 (LRILLLLAGFLAIKIVMLWLV), 327–347 (WFAVLLGQGSEFAFVVFGAAQ), and 359–379 (ALTLAVALSMAATPIFLVLLT). Residues 399–518 (QPRVIVAGFG…AGVAMPERET (120 aa)) enclose the RCK N-terminal domain. Positions 599 to 620 (QGTAEGKHSGEAADEPEVKPSI) are disordered.

It belongs to the monovalent cation:proton antiporter 2 (CPA2) transporter (TC 2.A.37) family. KefC subfamily. In terms of assembly, homodimer. Interacts with the regulatory subunit KefF.

Its subcellular location is the cell inner membrane. Functionally, pore-forming subunit of a potassium efflux system that confers protection against electrophiles. Catalyzes K(+)/H(+) antiport. This chain is Glutathione-regulated potassium-efflux system protein KefC, found in Salmonella dublin (strain CT_02021853).